The sequence spans 169 residues: Phycobiliprotein beta chain (169 aa).

An N4-methylasparagine modification is found at N72. C82 is a binding site for (2R,3E)-phycocyanobilin.

Belongs to the phycobiliprotein family. As to quaternary structure, heterodimer of an alpha and a beta chain. Post-translationally, contains one covalently linked bilin chromophore.

Its subcellular location is the cellular thylakoid membrane. In terms of biological role, light-harvesting photosynthetic bile pigment-protein from the phycobiliprotein complex. This is a protein functionally equivalent to, but with weaker absorbance than, allophycocyanin beta chain. The chain is Phycobiliprotein beta chain (apcD) from Mastigocladus laminosus (Fischerella sp.).